Reading from the N-terminus, the 387-residue chain is ATP phosphoribosyltransferase regulatory subunit (387 aa).

It belongs to the class-II aminoacyl-tRNA synthetase family. HisZ subfamily. Heteromultimer composed of HisG and HisZ subunits.

It localises to the cytoplasm. It participates in amino-acid biosynthesis; L-histidine biosynthesis; L-histidine from 5-phospho-alpha-D-ribose 1-diphosphate: step 1/9. Required for the first step of histidine biosynthesis. May allow the feedback regulation of ATP phosphoribosyltransferase activity by histidine. The protein is ATP phosphoribosyltransferase regulatory subunit of Polynucleobacter asymbioticus (strain DSM 18221 / CIP 109841 / QLW-P1DMWA-1) (Polynucleobacter necessarius subsp. asymbioticus).